The chain runs to 281 residues: Acyl-[acyl-carrier-protein]--UDP-N-acetylglucosamine O-acyltransferase (281 aa).

It belongs to the transferase hexapeptide repeat family. LpxA subfamily. As to quaternary structure, homotrimer.

It localises to the cytoplasm. The catalysed reaction is a (3R)-hydroxyacyl-[ACP] + UDP-N-acetyl-alpha-D-glucosamine = a UDP-3-O-[(3R)-3-hydroxyacyl]-N-acetyl-alpha-D-glucosamine + holo-[ACP]. The protein operates within glycolipid biosynthesis; lipid IV(A) biosynthesis; lipid IV(A) from (3R)-3-hydroxytetradecanoyl-[acyl-carrier-protein] and UDP-N-acetyl-alpha-D-glucosamine: step 1/6. In terms of biological role, involved in the biosynthesis of lipid A, a phosphorylated glycolipid that anchors the lipopolysaccharide to the outer membrane of the cell. The protein is Acyl-[acyl-carrier-protein]--UDP-N-acetylglucosamine O-acyltransferase of Rickettsia bellii (strain OSU 85-389).